Consider the following 590-residue polypeptide: Type I inositol polyphosphate 5-phosphatase 1 (590 aa).

The tract at residues D47–P73 is disordered. Residues Y48–E57 show a composition bias toward acidic residues. Position 60 is a phosphoserine (S60). Catalytic stretches follow at residues E445–S460 and G523–K538.

This sequence belongs to the inositol polyphosphate 5-phosphatase family. As to expression, expressed ubiquitously.

The catalysed reaction is 1D-myo-inositol 1,4,5-trisphosphate + H2O = 1D-myo-inositol 1,4-bisphosphate + phosphate. It catalyses the reaction 1D-myo-inositol 1,3,4,5-tetrakisphosphate + H2O = 1D-myo-inositol 1,3,4-trisphosphate + phosphate. Has phosphatase activity toward Ins(1,4,5)P3 and Ins(1,3,4,5)P4, but not toward Ins(1,4)P2, Ins(1)P. Seems to be involved in the abscisic acid (ABA) signaling pathway. Could also be able to hydrolyze PtdIns(4,5)P2 and PtdIns(3,4,5)P3. The protein is Type I inositol polyphosphate 5-phosphatase 1 of Arabidopsis thaliana (Mouse-ear cress).